The sequence spans 505 residues: ATP synthase subunit beta (505 aa).

The interval 1 to 25 is disordered; sequence MAKAATPKETAAVKKPAAPKKAATA. 183–190 is an ATP binding site; it reads GGAGVGKT.

It belongs to the ATPase alpha/beta chains family. In terms of assembly, F-type ATPases have 2 components, CF(1) - the catalytic core - and CF(0) - the membrane proton channel. CF(1) has five subunits: alpha(3), beta(3), gamma(1), delta(1), epsilon(1). CF(0) has three main subunits: a(1), b(2) and c(9-12). The alpha and beta chains form an alternating ring which encloses part of the gamma chain. CF(1) is attached to CF(0) by a central stalk formed by the gamma and epsilon chains, while a peripheral stalk is formed by the delta and b chains.

The protein localises to the cell inner membrane. It catalyses the reaction ATP + H2O + 4 H(+)(in) = ADP + phosphate + 5 H(+)(out). Produces ATP from ADP in the presence of a proton gradient across the membrane. The catalytic sites are hosted primarily by the beta subunits. The chain is ATP synthase subunit beta from Sinorhizobium fredii (strain NBRC 101917 / NGR234).